Reading from the N-terminus, the 398-residue chain is MNTLDFDKRPEDTRIVVAMSGGVDSSVVAGILKREGYDVLGITLQLYDHGAAVHRAGSCCAGQDIDDARRVCETLGIPHYVLDYEARFRETVINPFAEAYAMGETPIPCVACNQTVKFADLLATAQELGADALATGHYIRSRPNPVSGQPGRRALYRPIDSDRDQSWFLFATTQEQIDYLRFPLGGLSKAETRALAEEMGLVVAKKADSQDICFVPQGKYTDIINKLKPNAALAGDIVHLDGRVLGRHDGIVHYTIGQRRGIGVATGEPLYVVHLDARGRRVIVGPREALETRRVYLRDMNWLGDGALAADAGQGFTCFAKVRSTRPPTEAVLHADENGIYVDLMTGEAGVAPGQACVLYSAPGPDARVYGGGFIDRSERSVDAEASLKALLEKPVAA.

Residues 18–25 (AMSGGVDS) and leucine 44 each bind ATP. Cysteine 112 functions as the Nucleophile in the catalytic mechanism. An intrachain disulfide couples cysteine 112 to cysteine 213. Glycine 136 contributes to the ATP binding site. Residues 163-165 (RDQ) form an interaction with tRNA region. Cysteine 213 acts as the Cysteine persulfide intermediate in catalysis.

This sequence belongs to the MnmA/TRMU family.

The protein resides in the cytoplasm. It carries out the reaction S-sulfanyl-L-cysteinyl-[protein] + uridine(34) in tRNA + AH2 + ATP = 2-thiouridine(34) in tRNA + L-cysteinyl-[protein] + A + AMP + diphosphate + H(+). Functionally, catalyzes the 2-thiolation of uridine at the wobble position (U34) of tRNA, leading to the formation of s(2)U34. The polypeptide is tRNA-specific 2-thiouridylase MnmA (Agrobacterium fabrum (strain C58 / ATCC 33970) (Agrobacterium tumefaciens (strain C58))).